A 1294-amino-acid polypeptide reads, in one-letter code: Disease resistance protein L6 (1294 aa).

The signal sequence occupies residues 1 to 29 (MSYLREVATAVALLLPFILLNKFWRPNSK). Residues 34–54 (NDDDDSTSEVDAISDSTNPSG) form a disordered region. In terms of domain architecture, TIR spans 59 to 221 (VEYEVFLSFR…AIADKVSADI (163 aa)). NAD(+) is bound by residues 68 to 73 (RGPDTR) and Gly-101. Residue Glu-135 is part of the active site. Residues 241–480 (DDHITAVLEK…VYDRLKISYD (240 aa)) enclose the NB-ARC domain. 11 LRR repeats span residues 246–268 (AVLE…GMGG), 468–492 (LDEV…IFLD), 604–625 (LSEL…NNLL), 626–650 (PNLK…NYTM), 904–928 (LENL…GLQG), 1012–1039 (FPML…SLEE), 1063–1085 (LQKL…LEEL), 1086–1109 (KSLQ…KLKE), 1179–1203 (LEEL…SFLS), 1205–1229 (LQKL…ELKS), and 1254–1278 (LKNL…ALKT).

Belongs to the disease resistance TIR-NB-LRR family. Homooligomer; homooligomerization is required for activity.

The enzyme catalyses NAD(+) + H2O = ADP-D-ribose + nicotinamide + H(+). The catalysed reaction is NADP(+) + H2O = ADP-D-ribose 2'-phosphate + nicotinamide + H(+). It catalyses the reaction NAD(+) = 2'cADPR + nicotinamide + H(+). Its function is as follows. TIR-NB-LRR receptor-like protein that confers resistance to the flax rust phytopathogenic fungus (M.lini). An NAD(+) hydrolase (NADase): in response to activation, catalyzes cleavage of NAD(+) into ADP-D-ribose (ADPR) and nicotinamide; NAD(+) cleavage triggering a defense system that promotes cell death. Also able to hydrolyze NADP(+), but not other NAD(+)-related molecules. Makes small amounts of 2' cyclic ADPR (2'cADPR). This Linum usitatissimum (Flax) protein is Disease resistance protein L6.